The chain runs to 267 residues: tRNA-cytidine(32) 2-sulfurtransferase (267 aa).

The short motif at 37–42 (SGGKDS) is the PP-loop motif element. 3 residues coordinate [4Fe-4S] cluster: C112, C115, and C203.

This sequence belongs to the TtcA family. In terms of assembly, homodimer. Mg(2+) is required as a cofactor. The cofactor is [4Fe-4S] cluster.

The protein resides in the cytoplasm. The catalysed reaction is cytidine(32) in tRNA + S-sulfanyl-L-cysteinyl-[cysteine desulfurase] + AH2 + ATP = 2-thiocytidine(32) in tRNA + L-cysteinyl-[cysteine desulfurase] + A + AMP + diphosphate + H(+). The protein operates within tRNA modification. Its function is as follows. Catalyzes the ATP-dependent 2-thiolation of cytidine in position 32 of tRNA, to form 2-thiocytidine (s(2)C32). The sulfur atoms are provided by the cysteine/cysteine desulfurase (IscS) system. The protein is tRNA-cytidine(32) 2-sulfurtransferase of Dichelobacter nodosus (strain VCS1703A).